A 417-amino-acid polypeptide reads, in one-letter code: Serine hydroxymethyltransferase (417 aa).

Residues Leu116 and 120–122 (GHL) each bind (6S)-5,6,7,8-tetrahydrofolate. Lys225 carries the post-translational modification N6-(pyridoxal phosphate)lysine. 350 to 352 (SPF) is a binding site for (6S)-5,6,7,8-tetrahydrofolate.

The protein belongs to the SHMT family. As to quaternary structure, homodimer. Pyridoxal 5'-phosphate serves as cofactor.

Its subcellular location is the cytoplasm. It catalyses the reaction (6R)-5,10-methylene-5,6,7,8-tetrahydrofolate + glycine + H2O = (6S)-5,6,7,8-tetrahydrofolate + L-serine. It participates in one-carbon metabolism; tetrahydrofolate interconversion. It functions in the pathway amino-acid biosynthesis; glycine biosynthesis; glycine from L-serine: step 1/1. Functionally, catalyzes the reversible interconversion of serine and glycine with tetrahydrofolate (THF) serving as the one-carbon carrier. This reaction serves as the major source of one-carbon groups required for the biosynthesis of purines, thymidylate, methionine, and other important biomolecules. Also exhibits THF-independent aldolase activity toward beta-hydroxyamino acids, producing glycine and aldehydes, via a retro-aldol mechanism. The chain is Serine hydroxymethyltransferase from Ligilactobacillus salivarius (strain UCC118) (Lactobacillus salivarius).